Consider the following 237-residue polypeptide: B3 domain-containing protein Os06g0194400 (237 aa).

Disordered stretches follow at residues 1–23 and 38–82; these read MIEA…RQVE and SAAV…LPEK. The segment at residues 139-230 is a DNA-binding region (TF-B3); it reads FVKPMLQSHV…KFKVYIIRAS (92 aa).

The protein localises to the nucleus. The protein is B3 domain-containing protein Os06g0194400 of Oryza sativa subsp. japonica (Rice).